A 152-amino-acid polypeptide reads, in one-letter code: UPF0266 membrane protein YobD (152 aa).

The next 3 membrane-spanning stretches (helical) occupy residues 6–26 (LVLI…QFIM), 45–65 (VDSV…VTSH), and 67–87 (AQMT…IFWI).

Belongs to the UPF0266 family.

The protein resides in the cell inner membrane. The protein is UPF0266 membrane protein YobD of Salmonella paratyphi B (strain ATCC BAA-1250 / SPB7).